The chain runs to 89 residues: Small ribosomal subunit protein uS15 (89 aa).

Belongs to the universal ribosomal protein uS15 family. In terms of assembly, part of the 30S ribosomal subunit. Forms a bridge to the 50S subunit in the 70S ribosome, contacting the 23S rRNA.

Functionally, one of the primary rRNA binding proteins, it binds directly to 16S rRNA where it helps nucleate assembly of the platform of the 30S subunit by binding and bridging several RNA helices of the 16S rRNA. Its function is as follows. Forms an intersubunit bridge (bridge B4) with the 23S rRNA of the 50S subunit in the ribosome. This is Small ribosomal subunit protein uS15 from Proteus mirabilis (strain HI4320).